Here is a 316-residue protein sequence, read N- to C-terminus: MARSKIALIGGGQIGGVLAQLAALRELGDVVLFDIVEGLPQGKTLDIAEAAPVDGFDVSLKGTNTYEDIKGADVVIVTAGLPRKPGMSRDDLIAVNSKIMTTVAEGIKQYAPNAFVIVISNPLDAMVTLCQRITGFPHNRVVGQAGVLDSARFAAFIAWELGVSVKDVTAVTLGGHGDDMVPLVRYTSVCGVPVMELLEQKYGAAKAAEVMAAMVKRTRGAGGEVVALLKTGSAFYSPASSAIAMAESFLKDQKRVLPTCAFLKGEFGVDGLYVGVPVVIGAGGAERVLQLKLNAEEQAMMDKSVKAVKDLVATLK.

NAD(+) contacts are provided by residues 10–15 and Asp-34; that span reads GGGQIG. The substrate site is built by Arg-83 and Arg-89. NAD(+) is bound by residues Asn-96 and 119–121; that span reads ISN. Residues Asn-121 and Arg-152 each coordinate substrate. His-176 (proton acceptor) is an active-site residue.

This sequence belongs to the LDH/MDH superfamily. MDH type 3 family.

It carries out the reaction (S)-malate + NAD(+) = oxaloacetate + NADH + H(+). Catalyzes the reversible oxidation of malate to oxaloacetate. The sequence is that of Malate dehydrogenase 2 from Anaeromyxobacter dehalogenans (strain 2CP-C).